Reading from the N-terminus, the 336-residue chain is Quinolinate synthase (336 aa).

Residues His25 and Ser42 each coordinate iminosuccinate. Cys86 contacts [4Fe-4S] cluster. Iminosuccinate contacts are provided by residues 117 to 119 (YIN) and Ser138. Residue Cys198 coordinates [4Fe-4S] cluster. Iminosuccinate is bound by residues 224 to 226 (HPE) and Thr241. Residue Cys288 participates in [4Fe-4S] cluster binding.

It belongs to the quinolinate synthase family. Type 3 subfamily. Requires [4Fe-4S] cluster as cofactor.

The protein localises to the cytoplasm. It carries out the reaction iminosuccinate + dihydroxyacetone phosphate = quinolinate + phosphate + 2 H2O + H(+). Its pathway is cofactor biosynthesis; NAD(+) biosynthesis; quinolinate from iminoaspartate: step 1/1. In terms of biological role, catalyzes the condensation of iminoaspartate with dihydroxyacetone phosphate to form quinolinate. The chain is Quinolinate synthase from Helicobacter pylori (strain HPAG1).